The sequence spans 1703 residues: MGSQTLQILRQGVWASVTGGWYYDPDQNTFVNALHLYIWLFLLCFPFTLYMALQPSMVIVGIYCGVIAAMFLLLKTVNYRLHHALDEGEVVEHQTRESKGSRGGTGGANDPVTRREDSNGLGDPGGGIEMADFIRQETPPVDCSSRNSYVGMDLNQRMSSTHGRTTVAKAPGSEETVIFRRERSTFRRQAVRRRHNAGSNPTPPTSLIGSPLRYALHEADRPSGVRSWYRTVKSQPSRTPSQVTVLSTSASLLARNGSTHLEGSQDKASTVGTTSLQDEFGTLTPSLYEIRGCHIGLGNFESATRRASNNIWDTDSHLSSSTSVRFYPHDLISLHHIRANRLLTMDPELLEQQDDLSPDLQDAPLGQDNPSAASAAGKTRQYYRLWLLPFLWVGLHFDRLTLLALFDRNREVLENVLAVVLAVLVAFLGSVLLIHGFFADIWVFQFCLVIASCQYSLLKSVQPDSSSPRHGHNRIIAYSRPVYFCLCCGLIWLLHYGSLRTTSSRFTLYGVALTSSLVLASARDLVIVFTLCFPIIFFVGLLPQVNTFVMYLFEQLDIHVFGGNASTSLLSALYSILRSIVTVALLYCFCYGALKENWEPHHIPVLFSVFCGLLVAVSYHLSRQSSDPSVLMYVPLSKVFPQLRSKNPEDPLSEVQDPLPEKLRASVNERLQSDLIVCVVIAVLYFAIHVSTVFIALQPYLSYVLYGLLGAVGLLTHYLLPQLRKQLPWYCFSHPLLKTKEYYQFEVRDAAHVMWFEKFHVWLLFVEKNVLYPLVILNELSGSARELASPKRLDTEVGALMITVAGLKLLRSSYSSPTYQYITILFTVLFFTLDHRHLSETLLLDLFLMSIIFSKMWELFYKLHFVYTYIAPWQITWGSAFHAFAQPFAVPHSAMLFVQAVVSSIFSTPLNPFLGSAIFITSYVRPVKFWERDYNTKRVDHSNTRLASQLDRNPGSDDNNLNSIFYEHLTRSLQHSLCGDLLLGRWGNFSTGDCFILASDYLNALVHLIEIGNGLVTFQLRGLEFRGTYCQQREVEAITEGVEEDEGCCCCEPGHLPHILSFNAAFGQRWLAWEVVVTKYVLEGYSITDNSAASMLQVFELRRILTTYYVKGIIYYVIASPKLEEWLANDTMKEGLRGCSERNYVDLDATFNPNIDEDYDHRLSGISRDSFCGVYLGWIQYCNSRRTKPLDSEKDSALVLLCFGLCVLGRRALGTAAHQMSSNLESFLYGLHALFKGDFRISSVRDEWIFADMELLRKVVVPGIRMSLKLHQDHFTSPDEYDEPAVLFEAISTHQQNLVIAHEGDPAWRSAVLSNAPSLLALRHVLDEGTNEYKIIMLNRRYLSFRVIKVNKECVRGLWAGQQQELVFLRNRNPERGSIQNAKQALRNMINSSCDQPIGYPIYVSPLTTSYCNSHPQLRHILGGPISFGNIRNFVVSTWHRLRKGCGAGCNSGGNIEDSDAGGLSCGTSQSSQSVQSGLVRHSPARASVVSQSSSYRYSSSRHSSLRTSTTGLEPCRRSSTSQLSLRTLPTSLQLRLGSTSDPAGPSSSLSSHSIPPCKRHTLVGLLGNDGLCSTVTDPLSQHHHPHHHPQQHNPTHATVRRDDISYRVQIVDVGQVLENINLSKRKELQWPDDAMRHKAGRTCWRDWSPLEGMEGHVIHRWVPCSRDPGSRSHIDKTILLVQVEDKIVPIIETGVIELGAEV.

2 helical membrane-spanning segments follow: residues 31–53 and 57–74; these read VNALHLYIWLFLLCFPFTLYMAL and MVIVGIYCGVIAAMFLLL. Basic and acidic residues predominate over residues 91–100; it reads VEHQTRESKG. The tract at residues 91-126 is disordered; sequence VEHQTRESKGSRGGTGGANDPVTRREDSNGLGDPGG. An N-linked (GlcNAc...) asparagine glycan is attached at asparagine 256. 3 consecutive transmembrane segments (helical) span residues 416–438, 477–499, and 525–547; these read VLAVVLAVLVAFLGSVLLIHGFF, AYSRPVYFCLCCGLIWLLHYGSL, and LVIVFTLCFPIIFFVGLLPQVNT. N-linked (GlcNAc...) asparagine glycosylation is present at asparagine 564. Transmembrane regions (helical) follow at residues 569–591, 603–622, 675–697, and 704–721; these read LLSALYSILRSIVTVALLYCFCY, IPVLFSVFCGLLVAVSYHLS, LIVCVVIAVLYFAIHVSTVFIAL, and VLYGLLGAVGLLTHYLLP. N-linked (GlcNAc...) asparagine glycosylation is found at asparagine 988, asparagine 1129, and asparagine 1391. Disordered regions lie at residues 1475–1556 and 1577–1598; these read VQSG…HSIP and TDPLSQHHHPHHHPQQHNPTHA. Composition is skewed to low complexity over residues 1485–1510 and 1518–1556; these read ARASVVSQSSSYRYSSSRHSSLRTST and RSSTSQLSLRTLPTSLQLRLGSTSDPAGPSSSLSSHSIP. A compositionally biased stretch (basic residues) spans 1582–1591; sequence QHHHPHHHPQ. Asparagine 1622 carries N-linked (GlcNAc...) asparagine glycosylation.

Belongs to the pecanex family.

The protein localises to the membrane. In Takifugu rubripes (Japanese pufferfish), this protein is Pecanex-like protein 1.